A 59-amino-acid polypeptide reads, in one-letter code: Large ribosomal subunit protein uL30 (59 aa).

This sequence belongs to the universal ribosomal protein uL30 family. Part of the 50S ribosomal subunit.

This chain is Large ribosomal subunit protein uL30, found in Actinobacillus pleuropneumoniae serotype 7 (strain AP76).